We begin with the raw amino-acid sequence, 81 residues long: Antitoxin VapB20 (81 aa).

Antitoxin component of a type II toxin-antitoxin (TA) system. Neutralizes the toxic effect of cognate toxin VapC20. The sequence is that of Antitoxin VapB20 (vapB20) from Mycobacterium tuberculosis (strain CDC 1551 / Oshkosh).